A 109-amino-acid chain; its full sequence is uncharacterized protein (109 aa).

The next 3 helical transmembrane spans lie at 16–36 (YIPLVVLLQMYIIYVEPYYGL), 54–74 (TVYFLVICHSIESAIAFLLCL), and 80–100 (FCSSMKWIVSTFIFGGPTLAM).

It localises to the membrane. This is an uncharacterized protein from Schizosaccharomyces pombe (strain 972 / ATCC 24843) (Fission yeast).